Here is a 321-residue protein sequence, read N- to C-terminus: UDP-N-acetylenolpyruvoylglucosamine reductase (321 aa).

In terms of domain architecture, FAD-binding PCMH-type spans 36-203 (FRAGGLAEVM…TGALFEGYPE (168 aa)). R183 is a catalytic residue. S232 (proton donor) is an active-site residue. Residue E302 is part of the active site.

This sequence belongs to the MurB family. The cofactor is FAD.

Its subcellular location is the cytoplasm. The enzyme catalyses UDP-N-acetyl-alpha-D-muramate + NADP(+) = UDP-N-acetyl-3-O-(1-carboxyvinyl)-alpha-D-glucosamine + NADPH + H(+). The protein operates within cell wall biogenesis; peptidoglycan biosynthesis. In terms of biological role, cell wall formation. The sequence is that of UDP-N-acetylenolpyruvoylglucosamine reductase from Agrobacterium fabrum (strain C58 / ATCC 33970) (Agrobacterium tumefaciens (strain C58)).